Consider the following 696-residue polypeptide: UV radiation resistance-associated gene protein (696 aa).

Residues Ser-214 and Ser-218 each carry the phosphoserine modification. Coiled coils occupy residues 251–278 (LLTL…IARL) and 330–394 (NAQQ…RLEL). Ser-666 is modified (phosphoserine). A disordered region spans residues 666 to 696 (SYSDGEDEFRPRLEHNYSNSDSNITLQTERS). Tyr-667 carries the phosphotyrosine modification. A phosphoserine mark is found at Ser-668 and Ser-685. Over residues 681–696 (NYSNSDSNITLQTERS) the composition is skewed to polar residues.

Its function is as follows. Involved in biosynthetic vesicle transport to lysosomes. Acts as a cell growth regulator. Also has a crucial role in controlling organ rotation by regulating membrane-localized Notch receptor endocytosis and subsequent degradation. Regulation of organ rotation is not by induction of autophagy. The sequence is that of UV radiation resistance-associated gene protein (Uvrag) from Drosophila melanogaster (Fruit fly).